A 618-amino-acid polypeptide reads, in one-letter code: Arginine--tRNA ligase (618 aa).

A 'HIGH' region motif is present at residues 113 to 123; sequence ANPIHPLHIGH.

Belongs to the class-I aminoacyl-tRNA synthetase family.

The protein localises to the cytoplasm. It catalyses the reaction tRNA(Arg) + L-arginine + ATP = L-arginyl-tRNA(Arg) + AMP + diphosphate. This chain is Arginine--tRNA ligase, found in Sulfolobus acidocaldarius (strain ATCC 33909 / DSM 639 / JCM 8929 / NBRC 15157 / NCIMB 11770).